The sequence spans 331 residues: Hyaluronidase A (331 aa).

Disulfide bonds link C19–C308 and C185–C197. 2 N-linked (GlcNAc...) asparagine glycosylation sites follow: N79 and N99. E109 acts as the Proton donor in catalysis. N127 carries N-linked (GlcNAc...) asparagine glycosylation. N325 is a glycosylation site (N-linked (GlcNAc...) asparagine).

It belongs to the glycosyl hydrolase 56 family. Expressed by the venom gland.

It is found in the secreted. It catalyses the reaction Random hydrolysis of (1-&gt;4)-linkages between N-acetyl-beta-D-glucosamine and D-glucuronate residues in hyaluronate.. Hydrolyzes high molecular weight hyaluronic acid to produce small oligosaccharides. The sequence is that of Hyaluronidase A from Vespula vulgaris (Yellow jacket).